Reading from the N-terminus, the 113-residue chain is ATP synthase epsilon chain (113 aa).

This sequence belongs to the ATPase epsilon chain family. In terms of assembly, F-type ATPases have 2 components, CF(1) - the catalytic core - and CF(0) - the membrane proton channel. CF(1) has five subunits: alpha(3), beta(3), gamma(1), delta(1), epsilon(1). CF(0) has three main subunits: a, b and c.

It is found in the cell membrane. Produces ATP from ADP in the presence of a proton gradient across the membrane. The chain is ATP synthase epsilon chain from Wolbachia pipientis subsp. Culex pipiens (strain wPip).